Here is a 914-residue protein sequence, read N- to C-terminus: Chlorate reductase subunit alpha (914 aa).

A signal peptide (tat-type signal) is located at residues 1-32 (MNSPDEHNGRRRFLQFSAAALASAAASPSLWA). The 4Fe-4S Mo/W bis-MGD-type domain occupies 62–125 (DSVGVMTHSN…VYCSWSKQPD (64 aa)). The [4Fe-4S] cluster site is built by H69, C73, C77, and C111. D205 serves as a coordination point for Mo-bis(molybdopterin guanine dinucleotide).

The protein belongs to the prokaryotic molybdopterin-containing oxidoreductase family. As to quaternary structure, heterotrimer of alpha, beta and gamma subunits. It depends on [4Fe-4S] cluster as a cofactor. The cofactor is Mo-bis(molybdopterin guanine dinucleotide). Predicted to be exported by the Tat system. The position of the signal peptide cleavage has not been experimentally proven.

It localises to the periplasm. The catalysed reaction is chlorate + AH2 = chlorite + A + H2O. In terms of biological role, terminal reductase that allows anaerobic growth on chlorate as the sole respiratory oxidant. The protein is Chlorate reductase subunit alpha (clrA) of Ideonella dechloratans.